Reading from the N-terminus, the 314-residue chain is 4-hydroxy-3-methylbut-2-enyl diphosphate reductase (314 aa).

C12 lines the [4Fe-4S] cluster pocket. H41 and H74 together coordinate (2E)-4-hydroxy-3-methylbut-2-enyl diphosphate. The dimethylallyl diphosphate site is built by H41 and H74. Positions 41 and 74 each coordinate isopentenyl diphosphate. C96 is a [4Fe-4S] cluster binding site. H124 serves as a coordination point for (2E)-4-hydroxy-3-methylbut-2-enyl diphosphate. H124 contributes to the dimethylallyl diphosphate binding site. H124 is a binding site for isopentenyl diphosphate. E126 serves as the catalytic Proton donor. (2E)-4-hydroxy-3-methylbut-2-enyl diphosphate is bound at residue T167. C197 contacts [4Fe-4S] cluster. Positions 225, 226, 227, and 269 each coordinate (2E)-4-hydroxy-3-methylbut-2-enyl diphosphate. S225, S226, N227, and S269 together coordinate dimethylallyl diphosphate. S225, S226, N227, and S269 together coordinate isopentenyl diphosphate.

Belongs to the IspH family. It depends on [4Fe-4S] cluster as a cofactor.

It catalyses the reaction isopentenyl diphosphate + 2 oxidized [2Fe-2S]-[ferredoxin] + H2O = (2E)-4-hydroxy-3-methylbut-2-enyl diphosphate + 2 reduced [2Fe-2S]-[ferredoxin] + 2 H(+). It carries out the reaction dimethylallyl diphosphate + 2 oxidized [2Fe-2S]-[ferredoxin] + H2O = (2E)-4-hydroxy-3-methylbut-2-enyl diphosphate + 2 reduced [2Fe-2S]-[ferredoxin] + 2 H(+). It functions in the pathway isoprenoid biosynthesis; dimethylallyl diphosphate biosynthesis; dimethylallyl diphosphate from (2E)-4-hydroxy-3-methylbutenyl diphosphate: step 1/1. Its pathway is isoprenoid biosynthesis; isopentenyl diphosphate biosynthesis via DXP pathway; isopentenyl diphosphate from 1-deoxy-D-xylulose 5-phosphate: step 6/6. Functionally, catalyzes the conversion of 1-hydroxy-2-methyl-2-(E)-butenyl 4-diphosphate (HMBPP) into a mixture of isopentenyl diphosphate (IPP) and dimethylallyl diphosphate (DMAPP). Acts in the terminal step of the DOXP/MEP pathway for isoprenoid precursor biosynthesis. This chain is 4-hydroxy-3-methylbut-2-enyl diphosphate reductase, found in Mannheimia succiniciproducens (strain KCTC 0769BP / MBEL55E).